Reading from the N-terminus, the 246-residue chain is Acetoacetyl-CoA reductase (246 aa).

Residues 13 to 15 (GGI), G35, R40, 60 to 62 (GNV), and 88 to 92 (NAGIT) contribute to the NADP(+) site. Residues D94 and 147 to 150 (QFGQ) contribute to the substrate site. Y153 acts as the Proton acceptor in catalysis. Residue 183-186 (PGYI) coordinates NADP(+). Residues 184 to 185 (GY) and R195 each bind substrate.

The protein belongs to the short-chain dehydrogenases/reductases (SDR) family. In terms of assembly, homotetramer.

The protein resides in the cytoplasm. The catalysed reaction is a (3R)-3-hydroxyacyl-CoA + NADP(+) = a 3-oxoacyl-CoA + NADPH + H(+). It carries out the reaction (3R)-3-hydroxybutanoyl-CoA + NADP(+) = acetoacetyl-CoA + NADPH + H(+). Its pathway is biopolymer metabolism; poly-(R)-3-hydroxybutanoate biosynthesis. Catalyzes the chiral reduction of acetoacetyl-CoA to (R)-3-hydroxybutyryl-CoA. Is involved in the biosynthesis of polyhydroxybutyrate (PHB), which is accumulated as an intracellular energy reserve material when cells grow under conditions of nutrient limitation. In Cupriavidus necator (strain ATCC 17699 / DSM 428 / KCTC 22496 / NCIMB 10442 / H16 / Stanier 337) (Ralstonia eutropha), this protein is Acetoacetyl-CoA reductase.